The chain runs to 467 residues: ATP synthase subunit beta (467 aa).

ATP is bound at residue 150 to 157; that stretch reads GGAGVGKT.

Belongs to the ATPase alpha/beta chains family. In terms of assembly, F-type ATPases have 2 components, CF(1) - the catalytic core - and CF(0) - the membrane proton channel. CF(1) has five subunits: alpha(3), beta(3), gamma(1), delta(1), epsilon(1). CF(0) has three main subunits: a(1), b(2) and c(9-12). The alpha and beta chains form an alternating ring which encloses part of the gamma chain. CF(1) is attached to CF(0) by a central stalk formed by the gamma and epsilon chains, while a peripheral stalk is formed by the delta and b chains.

The protein resides in the cell inner membrane. It carries out the reaction ATP + H2O + 4 H(+)(in) = ADP + phosphate + 5 H(+)(out). Functionally, produces ATP from ADP in the presence of a proton gradient across the membrane. The catalytic sites are hosted primarily by the beta subunits. The protein is ATP synthase subunit beta of Vibrio vulnificus (strain YJ016).